The sequence spans 419 residues: N-acylneuraminate cytidylyltransferase (419 aa).

This sequence belongs to the CMP-NeuNAc synthase family. Monomer. May form aggregates. Mg(2+) serves as cofactor. Mn(2+) is required as a cofactor.

It is found in the cytoplasm. The catalysed reaction is an N-acylneuraminate + CTP = a CMP-N-acyl-beta-neuraminate + diphosphate. With respect to regulation, inhibited by the CTP analogs 5-mercuri-CTP and CTP-2',3'-dialdehyde. Its function is as follows. Catalyzes the formation of CMP-N-acetylneuraminic acid (CMP-NeuNAc), which is essential for the formation of the capsule. The protein is N-acylneuraminate cytidylyltransferase (neuA) of Escherichia coli O18:K1:H7 (strain RS218 / NMEC).